A 224-amino-acid polypeptide reads, in one-letter code: UPF0758 protein Csal_2972 (224 aa).

An MPN domain is found at 102–224; it reads ALTSPTLVRR…VVSFAERGWL (123 aa). The Zn(2+) site is built by H173, H175, and D186. The JAMM motif motif lies at 173–186; sequence HNHPSGVAEPSDAD.

The protein belongs to the UPF0758 family.

The polypeptide is UPF0758 protein Csal_2972 (Chromohalobacter salexigens (strain ATCC BAA-138 / DSM 3043 / CIP 106854 / NCIMB 13768 / 1H11)).